We begin with the raw amino-acid sequence, 130 residues long: Small ribosomal subunit protein uS11 (130 aa).

This sequence belongs to the universal ribosomal protein uS11 family. As to quaternary structure, part of the 30S ribosomal subunit. Interacts with proteins S7 and S18. Binds to IF-3.

In terms of biological role, located on the platform of the 30S subunit, it bridges several disparate RNA helices of the 16S rRNA. Forms part of the Shine-Dalgarno cleft in the 70S ribosome. This Gloeobacter violaceus (strain ATCC 29082 / PCC 7421) protein is Small ribosomal subunit protein uS11.